Consider the following 252-residue polypeptide: Glucosamine-6-phosphate deaminase (252 aa).

The active-site Proton acceptor; for enolization step is aspartate 64. Asparagine 130 acts as the For ring-opening step in catalysis. The Proton acceptor; for ring-opening step role is filled by histidine 132. Glutamate 137 functions as the For ring-opening step in the catalytic mechanism.

Belongs to the glucosamine/galactosamine-6-phosphate isomerase family. NagB subfamily.

The catalysed reaction is alpha-D-glucosamine 6-phosphate + H2O = beta-D-fructose 6-phosphate + NH4(+). The protein operates within amino-sugar metabolism; N-acetylneuraminate degradation; D-fructose 6-phosphate from N-acetylneuraminate: step 5/5. Its function is as follows. Catalyzes the reversible isomerization-deamination of glucosamine 6-phosphate (GlcN6P) to form fructose 6-phosphate (Fru6P) and ammonium ion. This is Glucosamine-6-phosphate deaminase from Exiguobacterium sibiricum (strain DSM 17290 / CCUG 55495 / CIP 109462 / JCM 13490 / 255-15).